Reading from the N-terminus, the 139-residue chain is Large ribosomal subunit protein uL16 (139 aa).

Residues 1 to 20 (MLIPRRVKHRKQHHPKRRGM) show a composition bias toward basic residues. Residues 1-22 (MLIPRRVKHRKQHHPKRRGMAK) are disordered.

Belongs to the universal ribosomal protein uL16 family. Part of the 50S ribosomal subunit.

Its function is as follows. Binds 23S rRNA and is also seen to make contacts with the A and possibly P site tRNAs. In Streptomyces coelicolor (strain ATCC BAA-471 / A3(2) / M145), this protein is Large ribosomal subunit protein uL16.